Consider the following 356-residue polypeptide: Protein pelota homolog (356 aa).

The protein belongs to the eukaryotic release factor 1 family. Pelota subfamily. Monomer. It depends on a divalent metal cation as a cofactor.

It localises to the cytoplasm. In terms of biological role, may function in recognizing stalled ribosomes, interact with stem-loop structures in stalled mRNA molecules, and effect endonucleolytic cleavage of the mRNA. May play a role in the release non-functional ribosomes and degradation of damaged mRNAs. Has endoribonuclease activity. This Staphylothermus marinus (strain ATCC 43588 / DSM 3639 / JCM 9404 / F1) protein is Protein pelota homolog.